The chain runs to 120 residues: NAD(P)H-quinone oxidoreductase subunit 3, organellar chromatophore (120 aa).

3 helical membrane-spanning segments follow: residues glycine 6–leucine 26, methionine 64–valine 84, and leucine 89–alanine 109.

The protein belongs to the complex I subunit 3 family. NDH is composed of at least 16 different subunits, 5 of which are encoded in the nucleus.

The protein localises to the plastid. The protein resides in the organellar chromatophore thylakoid membrane. It catalyses the reaction a plastoquinone + NADH + (n+1) H(+)(in) = a plastoquinol + NAD(+) + n H(+)(out). It carries out the reaction a plastoquinone + NADPH + (n+1) H(+)(in) = a plastoquinol + NADP(+) + n H(+)(out). NDH shuttles electrons from NAD(P)H:plastoquinone, via FMN and iron-sulfur (Fe-S) centers, to quinones in the photosynthetic chain and possibly in a chloroplast respiratory chain. The immediate electron acceptor for the enzyme in this species is believed to be plastoquinone. Couples the redox reaction to proton translocation, and thus conserves the redox energy in a proton gradient. This Paulinella chromatophora protein is NAD(P)H-quinone oxidoreductase subunit 3, organellar chromatophore.